Reading from the N-terminus, the 343-residue chain is N-acetyl-gamma-glutamyl-phosphate reductase (343 aa).

Cys-147 is a catalytic residue.

It belongs to the NAGSA dehydrogenase family. Type 1 subfamily.

It is found in the cytoplasm. The enzyme catalyses N-acetyl-L-glutamate 5-semialdehyde + phosphate + NADP(+) = N-acetyl-L-glutamyl 5-phosphate + NADPH + H(+). Its pathway is amino-acid biosynthesis; L-arginine biosynthesis; N(2)-acetyl-L-ornithine from L-glutamate: step 3/4. In terms of biological role, catalyzes the NADPH-dependent reduction of N-acetyl-5-glutamyl phosphate to yield N-acetyl-L-glutamate 5-semialdehyde. This Listeria monocytogenes serotype 4b (strain CLIP80459) protein is N-acetyl-gamma-glutamyl-phosphate reductase.